A 403-amino-acid chain; its full sequence is Phosphoglycerate kinase (403 aa).

Substrate contacts are provided by residues 24-26, Arg-39, 62-65, Arg-121, and Arg-161; these read DLN and HLGR. Residues Lys-211, Gly-299, Glu-330, and 359–362 each bind ATP; that span reads GGDS.

The protein belongs to the phosphoglycerate kinase family. Monomer.

The protein localises to the cytoplasm. The enzyme catalyses (2R)-3-phosphoglycerate + ATP = (2R)-3-phospho-glyceroyl phosphate + ADP. It participates in carbohydrate degradation; glycolysis; pyruvate from D-glyceraldehyde 3-phosphate: step 2/5. The polypeptide is Phosphoglycerate kinase (Rhodococcus erythropolis (strain PR4 / NBRC 100887)).